The primary structure comprises 556 residues: TNF receptor-associated factor 6-A (556 aa).

The segment at Cys-72–Asn-111 adopts an RING-type; degenerate zinc-finger fold. 2 TRAF-type zinc fingers span residues Arg-148–Ser-204 and Gly-205–Ala-261. Residues Asn-384–Val-533 form the MATH domain.

This sequence belongs to the TNF receptor-associated factor family. A subfamily. As to quaternary structure, homotrimer. Homooligomer. Interacts with tifa. Highly expressed in ovary and moderately expressed in kidney, spleen, stomach, colon and testis.

It localises to the cytoplasm. The protein resides in the cell cortex. It is found in the nucleus. Its subcellular location is the lipid droplet. It carries out the reaction S-ubiquitinyl-[E2 ubiquitin-conjugating enzyme]-L-cysteine + [acceptor protein]-L-lysine = [E2 ubiquitin-conjugating enzyme]-L-cysteine + N(6)-ubiquitinyl-[acceptor protein]-L-lysine.. It functions in the pathway protein modification; protein ubiquitination. In terms of biological role, E3 ubiquitin ligase that, together with UBE2N and UBE2V1, mediates the synthesis of 'Lys-63'-linked-polyubiquitin chains conjugated to proteins, such as IKBKG, IRAK1, AKT1 and AKT2. Also mediates ubiquitination of free/unanchored polyubiquitin chain that leads to MAP3K7 activation. This Xenopus laevis (African clawed frog) protein is TNF receptor-associated factor 6-A (traf6-a).